The chain runs to 275 residues: MGFLKGKKGLIVGVANNKSIAYGIAQSCFNQGATLAFTYLNESLEKRVRPIAQELNSPYVYELDVSKEEHFKSLYNSVKKDLGSLDFIVHSVAFAPKEALEGSLLETSKSAFNTAMEISVYSLIELTNTLKPLLNNGASVLTLSYLGSTKYMAHYNVMGLAKAALESAVRYLAVDLGKHHIRVNALSAGPIRTLASSGIADFRMILKWNEINAPLRKNVSLEEVGNAGMYLLSSLSSGVSGEVHFVDAGYHVMGMGAVEEKDNKATLLWDLHKEQ.

NAD(+) contacts are provided by residues G13, S19–I20, D64–V65, and V92. A95 contributes to the substrate binding site. Active-site proton acceptor residues include Y145 and Y155. Residues K162 and I191 to A195 contribute to the NAD(+) site.

This sequence belongs to the short-chain dehydrogenases/reductases (SDR) family. FabI subfamily. Homotetramer.

The enzyme catalyses a 2,3-saturated acyl-[ACP] + NAD(+) = a (2E)-enoyl-[ACP] + NADH + H(+). It functions in the pathway lipid metabolism; fatty acid biosynthesis. Functionally, catalyzes the reduction of a carbon-carbon double bond in an enoyl moiety that is covalently linked to an acyl carrier protein (ACP). Involved in the elongation cycle of fatty acid which are used in the lipid metabolism. The protein is Enoyl-[acyl-carrier-protein] reductase [NADH] FabI (fabI) of Helicobacter pylori (strain ATCC 700392 / 26695) (Campylobacter pylori).